We begin with the raw amino-acid sequence, 447 residues long: Tubulin beta-1 chain (447 aa).

The GTP site is built by Gln-11, Glu-69, Ser-138, Gly-142, Thr-143, Gly-144, Asn-204, and Asn-226. Position 69 (Glu-69) interacts with Mg(2+). Residues 427–447 (EATADEDAEFEEEQEAEVEEN) form a disordered region. The span at 429 to 447 (TADEDAEFEEEQEAEVEEN) shows a compositional bias: acidic residues.

The protein belongs to the tubulin family. As to quaternary structure, dimer of alpha and beta chains. A typical microtubule is a hollow water-filled tube with an outer diameter of 25 nm and an inner diameter of 15 nM. Alpha-beta heterodimers associate head-to-tail to form protofilaments running lengthwise along the microtubule wall with the beta-tubulin subunit facing the microtubule plus end conferring a structural polarity. Microtubules usually have 13 protofilaments but different protofilament numbers can be found in some organisms and specialized cells. Mg(2+) serves as cofactor.

The protein resides in the cytoplasm. Its subcellular location is the cytoskeleton. Its function is as follows. Tubulin is the major constituent of microtubules, a cylinder consisting of laterally associated linear protofilaments composed of alpha- and beta-tubulin heterodimers. Microtubules grow by the addition of GTP-tubulin dimers to the microtubule end, where a stabilizing cap forms. Below the cap, tubulin dimers are in GDP-bound state, owing to GTPase activity of alpha-tubulin. The chain is Tubulin beta-1 chain from Glossina morsitans morsitans (Savannah tsetse fly).